Consider the following 310-residue polypeptide: tRNA pseudouridine synthase B (310 aa).

Asp-47 acts as the Nucleophile in catalysis.

This sequence belongs to the pseudouridine synthase TruB family. Type 1 subfamily.

It catalyses the reaction uridine(55) in tRNA = pseudouridine(55) in tRNA. Functionally, responsible for synthesis of pseudouridine from uracil-55 in the psi GC loop of transfer RNAs. In Caulobacter vibrioides (strain ATCC 19089 / CIP 103742 / CB 15) (Caulobacter crescentus), this protein is tRNA pseudouridine synthase B.